A 399-amino-acid chain; its full sequence is S-adenosylmethionine synthase (399 aa).

Residue H17 coordinates ATP. A Mg(2+)-binding site is contributed by D19. E45 is a binding site for K(+). 2 residues coordinate L-methionine: E58 and Q101. The flexible loop stretch occupies residues 101 to 111; the sequence is QSPDIAQGVDE. ATP-binding positions include 177 to 179, 244 to 245, D253, 259 to 260, A276, and K280; these read DAK, RF, and RK. D253 contributes to the L-methionine binding site. K284 lines the L-methionine pocket.

Belongs to the AdoMet synthase family. Homotetramer; dimer of dimers. Mg(2+) serves as cofactor. The cofactor is K(+).

Its subcellular location is the cytoplasm. It catalyses the reaction L-methionine + ATP + H2O = S-adenosyl-L-methionine + phosphate + diphosphate. The protein operates within amino-acid biosynthesis; S-adenosyl-L-methionine biosynthesis; S-adenosyl-L-methionine from L-methionine: step 1/1. In terms of biological role, catalyzes the formation of S-adenosylmethionine (AdoMet) from methionine and ATP. The overall synthetic reaction is composed of two sequential steps, AdoMet formation and the subsequent tripolyphosphate hydrolysis which occurs prior to release of AdoMet from the enzyme. The sequence is that of S-adenosylmethionine synthase from Listeria welshimeri serovar 6b (strain ATCC 35897 / DSM 20650 / CCUG 15529 / CIP 8149 / NCTC 11857 / SLCC 5334 / V8).